Reading from the N-terminus, the 324-residue chain is Beta-ketoacyl-[acyl-carrier-protein] synthase III (324 aa).

Residues Cys-112 and His-251 contribute to the active site. The ACP-binding stretch occupies residues 252–256; the sequence is QANLR. Asn-281 is an active-site residue.

Belongs to the thiolase-like superfamily. FabH family. In terms of assembly, homodimer.

The protein localises to the cytoplasm. The catalysed reaction is malonyl-[ACP] + acetyl-CoA + H(+) = 3-oxobutanoyl-[ACP] + CO2 + CoA. It functions in the pathway lipid metabolism; fatty acid biosynthesis. Its function is as follows. Catalyzes the condensation reaction of fatty acid synthesis by the addition to an acyl acceptor of two carbons from malonyl-ACP. Catalyzes the first condensation reaction which initiates fatty acid synthesis and may therefore play a role in governing the total rate of fatty acid production. Possesses both acetoacetyl-ACP synthase and acetyl transacylase activities. Its substrate specificity determines the biosynthesis of branched-chain and/or straight-chain of fatty acids. The chain is Beta-ketoacyl-[acyl-carrier-protein] synthase III from Clostridium perfringens (strain 13 / Type A).